Reading from the N-terminus, the 309-residue chain is Mitochondrial import receptor subunit TOM34 (309 aa).

Serine 8 carries the phosphoserine modification. TPR repeat units follow at residues 9 to 42, 51 to 84, and 86 to 118; these read VEQL…LQAR, SVLY…VPFS, and KPLL…DNSV. Residues 158–187 are disordered; that stretch reads WSSLPSENHKETAKSKSKETTATKNRVPSA. Residue serine 160 is modified to Phosphoserine. A compositionally biased stretch (basic and acidic residues) spans 164–178; sequence ENHKETAKSKSKETT. Residue serine 186 is modified to Phosphoserine. TPR repeat units follow at residues 193-226, 227-260, and 262-294; these read ARVL…SSLE, SATY…DGKN, and KAFY…EPRN. Lysine 197 is covalently cross-linked (Glycyl lysine isopeptide (Lys-Gly) (interchain with G-Cter in SUMO2)).

It belongs to the Tom34 family. Interacts with HSP90A, VCP, ATP6V1D, KIAA0665, AMPK, and DMAP1 through its TPR repeat.

It localises to the cytoplasm. The protein localises to the mitochondrion outer membrane. In terms of biological role, plays a role in the import of cytosolically synthesized preproteins into mitochondria. Binds the mature portion of precursor proteins. Interacts with cellular components, and possesses weak ATPase activity. May be a chaperone-like protein that helps to keep newly synthesized precursors in an unfolded import compatible state. The polypeptide is Mitochondrial import receptor subunit TOM34 (Tomm34) (Rattus norvegicus (Rat)).